A 391-amino-acid chain; its full sequence is Formate-dependent phosphoribosylglycinamide formyltransferase (391 aa).

N(1)-(5-phospho-beta-D-ribosyl)glycinamide contacts are provided by residues 20-21 and E80; that span reads EL. ATP is bound by residues R112, K153, 158 to 163, 193 to 196, and E201; these read SSGKGQ and EGFI. The ATP-grasp domain maps to 117-306; sequence RLAAETLGLP…EFALHVRAIL (190 aa). E265 and E277 together coordinate Mg(2+). N(1)-(5-phospho-beta-D-ribosyl)glycinamide-binding positions include D284, K354, and 361-362; that span reads RR.

The protein belongs to the PurK/PurT family. In terms of assembly, homodimer.

The catalysed reaction is N(1)-(5-phospho-beta-D-ribosyl)glycinamide + formate + ATP = N(2)-formyl-N(1)-(5-phospho-beta-D-ribosyl)glycinamide + ADP + phosphate + H(+). It participates in purine metabolism; IMP biosynthesis via de novo pathway; N(2)-formyl-N(1)-(5-phospho-D-ribosyl)glycinamide from N(1)-(5-phospho-D-ribosyl)glycinamide (formate route): step 1/1. Its function is as follows. Involved in the de novo purine biosynthesis. Catalyzes the transfer of formate to 5-phospho-ribosyl-glycinamide (GAR), producing 5-phospho-ribosyl-N-formylglycinamide (FGAR). Formate is provided by PurU via hydrolysis of 10-formyl-tetrahydrofolate. The protein is Formate-dependent phosphoribosylglycinamide formyltransferase of Shewanella sp. (strain ANA-3).